A 180-amino-acid polypeptide reads, in one-letter code: Regulator of G-protein signaling 8 (180 aa).

At Ser-26 the chain carries Phosphoserine. Residues 56–171 (SFDVLLSHKY…FLRSKMYLDL (116 aa)) form the RGS domain.

As to quaternary structure, interacts with GNAO1 and GNAI3.

The protein localises to the cell membrane. It localises to the membrane. It is found in the perikaryon. The protein resides in the cell projection. Its subcellular location is the dendrite. The protein localises to the nucleus. Its function is as follows. Regulates G protein-coupled receptor signaling cascades, including signaling via muscarinic acetylcholine receptor CHRM2 and dopamine receptor DRD2. Inhibits signal transduction by increasing the GTPase activity of G protein alpha subunits, thereby driving them into their inactive GDP-bound form. Modulates the activity of potassium channels that are activated in response to DRD2 and CHRM2 signaling. The sequence is that of Regulator of G-protein signaling 8 (Rgs8) from Mus musculus (Mouse).